Reading from the N-terminus, the 105-residue chain is uncharacterized protein (105 aa).

Positions 1 to 24 (MYWPCLVITPFTVGESFCLLLSLG) are cleaved as a signal peptide.

This is an uncharacterized protein from Saccharomyces cerevisiae (strain ATCC 204508 / S288c) (Baker's yeast).